The following is a 427-amino-acid chain: Trigger factor (427 aa).

Residues 163–248 (GDTVVIDFVG…IHEVKAKEVP (86 aa)) form the PPIase FKBP-type domain.

This sequence belongs to the FKBP-type PPIase family. Tig subfamily.

The protein resides in the cytoplasm. The enzyme catalyses [protein]-peptidylproline (omega=180) = [protein]-peptidylproline (omega=0). In terms of biological role, involved in protein export. Acts as a chaperone by maintaining the newly synthesized protein in an open conformation. Functions as a peptidyl-prolyl cis-trans isomerase. This Streptococcus pneumoniae (strain JJA) protein is Trigger factor.